A 124-amino-acid polypeptide reads, in one-letter code: MAEPTPTTTLNIKIEFGGGLELLFSNQRSHKVSIPSLVPKDNTTSAKNPPPKDDLLKPADITYLIHHMRDHLLQEREELFVENGTVRPGILVLVNDTDWELEGEGDYVLKDGDEVVFISTLHGG.

The disordered stretch occupies residues 34–53 (IPSLVPKDNTTSAKNPPPKD). Position 124 is a 1-thioglycine (Gly124). Residue Gly124 forms a Glycyl lysine isopeptide (Gly-Lys) (interchain with K-? in acceptor proteins) linkage.

This sequence belongs to the URM1 family. In terms of processing, C-terminal thiocarboxylation occurs in 2 steps, it is first acyl-adenylated (-COAMP) via the hesA/moeB/thiF part of UBA4, then thiocarboxylated (-COSH) via the rhodanese domain of UBA4.

It is found in the cytoplasm. It participates in tRNA modification; 5-methoxycarbonylmethyl-2-thiouridine-tRNA biosynthesis. Functionally, acts as a sulfur carrier required for 2-thiolation of mcm(5)S(2)U at tRNA wobble positions of cytosolic tRNA(Lys), tRNA(Glu) and tRNA(Gln). Serves as sulfur donor in tRNA 2-thiolation reaction by being thiocarboxylated (-COSH) at its C-terminus by the MOCS3 homolog UBA4. The sulfur is then transferred to tRNA to form 2-thiolation of mcm(5)S(2)U. Prior mcm(5) tRNA modification by the elongator complex is required for 2-thiolation. Also acts as a ubiquitin-like protein (UBL) that is covalently conjugated via an isopeptide bond to lysine residues of target proteins such as AHP1. The thiocarboxylated form serves as substrate for conjugation and oxidative stress specifically induces the formation of UBL-protein conjugates. The polypeptide is Ubiquitin-related modifier 1 (Coprinopsis cinerea (strain Okayama-7 / 130 / ATCC MYA-4618 / FGSC 9003) (Inky cap fungus)).